A 347-amino-acid polypeptide reads, in one-letter code: Lipoyl synthase (347 aa).

[4Fe-4S] cluster is bound by residues Cys55, Cys60, Cys66, Cys81, Cys85, Cys88, and Ser292. The Radical SAM core domain maps to 67–281; that stretch reads WEDREASFLI…SEAAYDMGFP (215 aa).

This sequence belongs to the radical SAM superfamily. Lipoyl synthase family. The cofactor is [4Fe-4S] cluster.

It localises to the cytoplasm. The enzyme catalyses [[Fe-S] cluster scaffold protein carrying a second [4Fe-4S](2+) cluster] + N(6)-octanoyl-L-lysyl-[protein] + 2 oxidized [2Fe-2S]-[ferredoxin] + 2 S-adenosyl-L-methionine + 4 H(+) = [[Fe-S] cluster scaffold protein] + N(6)-[(R)-dihydrolipoyl]-L-lysyl-[protein] + 4 Fe(3+) + 2 hydrogen sulfide + 2 5'-deoxyadenosine + 2 L-methionine + 2 reduced [2Fe-2S]-[ferredoxin]. The protein operates within protein modification; protein lipoylation via endogenous pathway; protein N(6)-(lipoyl)lysine from octanoyl-[acyl-carrier-protein]: step 2/2. In terms of biological role, catalyzes the radical-mediated insertion of two sulfur atoms into the C-6 and C-8 positions of the octanoyl moiety bound to the lipoyl domains of lipoate-dependent enzymes, thereby converting the octanoylated domains into lipoylated derivatives. The protein is Lipoyl synthase of Corynebacterium urealyticum (strain ATCC 43042 / DSM 7109).